Reading from the N-terminus, the 422-residue chain is UDP-N-acetyl-D-glucosamine 6-dehydrogenase (422 aa).

NAD(+) is bound by residues Val-14, Asp-32, Arg-37, Thr-83, and Thr-118. The active-site Nucleophile is Cys-258. NAD(+) is bound at residue Arg-329.

The protein belongs to the UDP-glucose/GDP-mannose dehydrogenase family.

It carries out the reaction UDP-N-acetyl-alpha-D-glucosamine + 2 NAD(+) + H2O = UDP-2-acetamido-2-deoxy-alpha-D-glucuronate + 2 NADH + 3 H(+). It functions in the pathway bacterial outer membrane biogenesis; LPS O-antigen biosynthesis. Requires either potassium or ammonium-containing salts for activity. Functionally, dehydrogenase required for the biosynthesis of the B-band O antigen of serotype O6 lipopolysaccharide. Is also required for flagellin glycosylation. Catalyzes the conversion of UDP-N-acetylglucosamine (UDP-GlcNAc) to UDP-N-acetylglucosaminuronic acid (UDP-GlcNAcA). Can also catalyze the conversion of UDP-N-acetyl-galactosamine (UDP-GalNAc) to UDP-N-acetylgalactosaminuronic acid (UDP-GalNAcA), with low efficiency. Can use NAD(+) or NADP(+), with a preference for NAD(+). The protein is UDP-N-acetyl-D-glucosamine 6-dehydrogenase of Pseudomonas aeruginosa.